A 256-amino-acid chain; its full sequence is Small ribosomal subunit protein eS1 (256 aa).

The segment covering 1 to 18 (MAVGKNKRLSKGKKGIKK) has biased composition (basic residues). The disordered stretch occupies residues 1–20 (MAVGKNKRLSKGKKGIKKRT). An N-acetylalanine; partial modification is found at alanine 2.

This sequence belongs to the eukaryotic ribosomal protein eS1 family. In terms of assembly, component of the small ribosomal subunit. Mature ribosomes consist of a small (40S) and a large (60S) subunit. The 40S subunit contains about 33 different proteins and 1 molecule of RNA (18S). The 60S subunit contains about 49 different proteins and 3 molecules of RNA (25S, 5.8S and 5S).

It is found in the cytoplasm. The chain is Small ribosomal subunit protein eS1 (rps1) from Aspergillus terreus (strain NIH 2624 / FGSC A1156).